We begin with the raw amino-acid sequence, 494 residues long: Glycerol kinase (494 aa).

Thr-13 serves as a coordination point for ADP. 3 residues coordinate ATP: Thr-13, Thr-14, and Ser-15. A sn-glycerol 3-phosphate-binding site is contributed by Thr-13. Arg-17 is an ADP binding site. Residues Arg-83, Glu-84, Tyr-135, and Asp-244 each contribute to the sn-glycerol 3-phosphate site. Residues Arg-83, Glu-84, Tyr-135, Asp-244, and Gln-245 each contribute to the glycerol site. ADP is bound by residues Thr-266 and Gly-309. 4 residues coordinate ATP: Thr-266, Gly-309, Gln-313, and Gly-410. ADP contacts are provided by Gly-410 and Asn-414.

This sequence belongs to the FGGY kinase family.

It catalyses the reaction glycerol + ATP = sn-glycerol 3-phosphate + ADP + H(+). It participates in polyol metabolism; glycerol degradation via glycerol kinase pathway; sn-glycerol 3-phosphate from glycerol: step 1/1. Inhibited by fructose 1,6-bisphosphate (FBP). Key enzyme in the regulation of glycerol uptake and metabolism. Catalyzes the phosphorylation of glycerol to yield sn-glycerol 3-phosphate. This Shewanella sp. (strain MR-7) protein is Glycerol kinase.